Here is a 280-residue protein sequence, read N- to C-terminus: DNA repair protein XRCC2 (280 aa).

Ser-10 is subject to Phosphoserine.

It belongs to the RecA family. RAD51 subfamily. As to quaternary structure, interacts with RAD51D. Part of the BCDX2 complex consisting of RAD51B, RAD51C, RAD51D and XRCC2; the complex has a ring-like structure arranged into a flat disk around a central channel. In the absence of DNA, the BCDX2 subcomplex XRCC2:RAD51D formed a multimeric ring structure; in the presence of single-stranded DNA it formed a filamentous structure with the ssDNA.

Its subcellular location is the nucleus. It is found in the cytoplasm. The protein localises to the cytoskeleton. It localises to the microtubule organizing center. The protein resides in the centrosome. In terms of biological role, involved in the homologous recombination repair (HRR) pathway of double-stranded DNA, thought to repair chromosomal fragmentation, translocations and deletions. Part of the RAD51 paralog protein complex BCDX2 which acts in the BRCA1-BRCA2-dependent HR pathway. Upon DNA damage, BCDX2 acts downstream of BRCA2 recruitment and upstream of RAD51 recruitment. BCDX2 binds predominantly to the intersection of the four duplex arms of the Holliday junction and to junction of replication forks. The BCDX2 complex was originally reported to bind single-stranded DNA, single-stranded gaps in duplex DNA and specifically to nicks in duplex DNA. This is DNA repair protein XRCC2 (XRCC2) from Homo sapiens (Human).